We begin with the raw amino-acid sequence, 575 residues long: Cyclic nucleotide-gated channel alpha-4 (575 aa).

Topologically, residues 1 to 38 are cytoplasmic; sequence MSQDGKVKTTESTPPAPTKARKWLPVLDPSGDYYYWWL. The chain crosses the membrane as a helical span at residues 39-60; that stretch reads NTMVFPIMYNLIIVVCRACFPD. Residues 61–70 are Extracellular-facing; the sequence is LQHSYLVAWF. Residues 71–91 traverse the membrane as a helical segment; it reads VLDYTSDLLYLLDIGVRFHTG. The Cytoplasmic portion of the chain corresponds to 92 to 116; sequence FLEQGILVVDKGMIASRYVRTWSFL. Residues 117-135 form a helical membrane-spanning segment; sequence LDLASLVPTDAAYVQLGPH. Topologically, residues 136 to 140 are extracellular; it reads IPTLR. The chain crosses the membrane as a helical span at residues 141–159; the sequence is LNRFLRVPRLFEAFDRTET. Over 160–166 the chain is Cytoplasmic; it reads RTAYPNA. Positions 164 to 272 are ion conduction pathway; sequence PNAFRIAKLM…GSMSSVIYNM (109 aa). Residues 167 to 190 traverse the membrane as a helical segment; that stretch reads FRIAKLMLYIFVVIHWNSCLYFAL. The Extracellular segment spans residues 191–213; it reads SRYLGFGRDAWVYPDPAQPGFER. 2 consecutive transmembrane segments (helical) span residues 214-248 and 249-273; these read LRRQ…LFMV and GDFL…YNMN. A selectivity filter region spans residues 231–234; the sequence is TVGD. Residues 274–350 form a C-linker region; the sequence is TADAAFYPDH…STLSRVQIFQ (77 aa). The Cytoplasmic portion of the chain corresponds to 274 to 575; that stretch reads TADAAFYPDH…AGQAGPSGIE (302 aa). An IQ-type motif is present at residues 292 to 302; it reads LQHVNKRLERR. 348 to 471 contributes to the a nucleoside 3',5'-cyclic phosphate binding site; sequence IFQNCEASLL…AVMEEKGREI (124 aa). Positions 354–474 are cyclic nucleotide-binding domain; the sequence is ASLLEELVLK…EEKGREILLK (121 aa). The 3',5'-cyclic GMP site is built by G414, S417, R430, and T431. Residues R430 and T431 each coordinate 3',5'-cyclic AMP. The stretch at 493 to 547 forms a coiled coil; sequence TESRLKGLDQQLDDLQTKFARLLAELESSALKIAYRIERLEWQTREWPMPEDMGE. The interval 537–575 is disordered; that stretch reads REWPMPEDMGEADDEAEPGEGTSKDGEGKAGQAGPSGIE. A compositionally biased stretch (acidic residues) spans 544 to 554; it reads DMGEADDEAEP.

It belongs to the cyclic nucleotide-gated cation channel (TC 1.A.1.5) family. CNGA4 subfamily. The olfactory cyclic nucleotide-gated channel is an heterotetramer composed of CNGA2, CNGA4 and CNGB1b subunits with 2:1:1 stoichiometry. May form homomeric channels gated by nitric oxide. N-glycosylated. Olfactory neurons. Expressed in olfactory sensory cilia (at protein level).

The protein localises to the cell projection. It localises to the cilium membrane. The enzyme catalyses Ca(2+)(in) = Ca(2+)(out). It catalyses the reaction Na(+)(in) = Na(+)(out). It carries out the reaction K(+)(in) = K(+)(out). The catalysed reaction is NH4(+)(in) = NH4(+)(out). The enzyme catalyses Rb(+)(in) = Rb(+)(out). It catalyses the reaction Li(+)(in) = Li(+)(out). It carries out the reaction Cs(+)(in) = Cs(+)(out). Ca(2+)-calmodulin exerts its inhibitory effect in cAMP sensitivity by binding to IQ-like motif of CNGA4 and preferably binds to the channel in the closed state. Inhibition by PIP3 of the CNG channel probably occurs via CGNA2 binding. Ca(2+) currents are inhibited by pimozide, an L-type Ca(2+) channel blocker. Its function is as follows. Pore-forming subunit of the olfactory cyclic nucleotide-gated channel. Operates in the cilia of olfactory sensory neurons where chemical stimulation of the odorant is converted to an electrical signal. Mediates odorant-induced cAMP-dependent Ca(2+) influx triggering neuron depolarization. The rise of intracellular Ca(2+) levels potentiates the olfactory response by activating Ca(2+)-dependent Cl(-) channels, but it also serves as a negative feedback signal to desensitize the channel for rapid adaptation to odorants. Conducts cAMP- and cGMP-gated ion currents, with permeability for monovalent and divalent cations. May conduct nitric oxide-gated Ca(2+) currents relevant to neurons of vomeronasal organ, a system involved in the perception of pheromones. This is Cyclic nucleotide-gated channel alpha-4 from Rattus norvegicus (Rat).